A 348-amino-acid chain; its full sequence is ECA polysaccharide chain length modulation protein (348 aa).

2 helical membrane passes run 31–51 (FWII…TFFA) and 323–343 (AFLM…VALT).

This sequence belongs to the WzzB/Cld/Rol family. In terms of assembly, probably part of a complex composed of WzxE, WzyE and WzzE.

It is found in the cell inner membrane. Its pathway is bacterial outer membrane biogenesis; enterobacterial common antigen biosynthesis. In terms of biological role, modulates the polysaccharide chain length of enterobacterial common antigen (ECA). The polypeptide is ECA polysaccharide chain length modulation protein (Salmonella typhimurium (strain LT2 / SGSC1412 / ATCC 700720)).